Here is a 207-residue protein sequence, read N- to C-terminus: Outer-membrane lipoprotein LolB (207 aa).

An N-terminal signal peptide occupies residues 1–21 (MPTKTVRCLRLLPLASLLLAA). The N-palmitoyl cysteine moiety is linked to residue Cys22. The S-diacylglycerol cysteine moiety is linked to residue Cys22.

Belongs to the LolB family. In terms of assembly, monomer.

It localises to the cell outer membrane. In terms of biological role, plays a critical role in the incorporation of lipoproteins in the outer membrane after they are released by the LolA protein. In Pectobacterium atrosepticum (strain SCRI 1043 / ATCC BAA-672) (Erwinia carotovora subsp. atroseptica), this protein is Outer-membrane lipoprotein LolB.